The primary structure comprises 184 residues: uncharacterized protein (184 aa).

A 4Fe-4S domain is found at 72–135 (RKSQAILLIG…GIALGSAVKV (64 aa)). Positions 92, 95, 100, and 118 each coordinate [4Fe-4S] cluster.

[4Fe-4S] cluster serves as cofactor.

This is an uncharacterized protein from Archaeoglobus fulgidus (strain ATCC 49558 / DSM 4304 / JCM 9628 / NBRC 100126 / VC-16).